Reading from the N-terminus, the 257-residue chain is MHVLRQQLTLFFIAMGFFTRIPMPTWVKVDGESLNKANRYFGLIGLLVGGICALVYEITRGFLPVSVSIIFAMIAGLVVTGGFHEDGLADTADGLGGGWSVADKLKIMKDSRIGTYGALALVMGLMLKFILLSELALYNPDLVVTALIVGHTLSRVMAASLIFSQSYVRDDDSSKSKPLAQNQTVNELLILLATAVLVLWCSGLSGGLYIAIGLVLLRWGLIYLFHRQIGGYTGDTLGATQQLAELACYLMLLGFSL.

A run of 6 helical transmembrane segments spans residues 7–27 (QLTL…PTWV), 39–59 (RYFG…YEIT), 61–81 (GFLP…VVTG), 113–133 (IGTY…ILLS), 143–163 (VVTA…SLIF), and 196–216 (VLVL…GLVL).

It belongs to the CobS family. The cofactor is Mg(2+).

Its subcellular location is the cell inner membrane. The enzyme catalyses alpha-ribazole + adenosylcob(III)inamide-GDP = adenosylcob(III)alamin + GMP + H(+). It catalyses the reaction alpha-ribazole 5'-phosphate + adenosylcob(III)inamide-GDP = adenosylcob(III)alamin 5'-phosphate + GMP + H(+). It participates in cofactor biosynthesis; adenosylcobalamin biosynthesis; adenosylcobalamin from cob(II)yrinate a,c-diamide: step 7/7. In terms of biological role, joins adenosylcobinamide-GDP and alpha-ribazole to generate adenosylcobalamin (Ado-cobalamin). Also synthesizes adenosylcobalamin 5'-phosphate from adenosylcobinamide-GDP and alpha-ribazole 5'-phosphate. In Shewanella woodyi (strain ATCC 51908 / MS32), this protein is Adenosylcobinamide-GDP ribazoletransferase.